The chain runs to 600 residues: Proline--tRNA ligase (600 aa).

It belongs to the class-II aminoacyl-tRNA synthetase family. ProS type 1 subfamily. In terms of assembly, homodimer.

It localises to the cytoplasm. It catalyses the reaction tRNA(Pro) + L-proline + ATP = L-prolyl-tRNA(Pro) + AMP + diphosphate. In terms of biological role, catalyzes the attachment of proline to tRNA(Pro) in a two-step reaction: proline is first activated by ATP to form Pro-AMP and then transferred to the acceptor end of tRNA(Pro). As ProRS can inadvertently accommodate and process non-cognate amino acids such as alanine and cysteine, to avoid such errors it has two additional distinct editing activities against alanine. One activity is designated as 'pretransfer' editing and involves the tRNA(Pro)-independent hydrolysis of activated Ala-AMP. The other activity is designated 'posttransfer' editing and involves deacylation of mischarged Ala-tRNA(Pro). The misacylated Cys-tRNA(Pro) is not edited by ProRS. This chain is Proline--tRNA ligase, found in Acaryochloris marina (strain MBIC 11017).